The sequence spans 362 residues: DLA class I histocompatibility antigen, A9/A9 alpha chain (362 aa).

The first 24 residues, 1–24 (MEVVMPRALLVLLSAALALTPTRA), serve as a signal peptide directing secretion. The segment at 25–114 (GSHSLRYFYT…LRGYYNQSEA (90 aa)) is alpha-1. Residues 25 to 306 (GSHSLRYFYT…RRWEPSPLST (282 aa)) are Extracellular-facing. N-linked (GlcNAc...) asparagine glycosylation is present at N110. The segment at 115–207 (GSHTRQTMYG…EMGKETLLRA (93 aa)) is alpha-2. Cystine bridges form between C125–C189 and C228–C284. Positions 208-299 (DPPSTRVTHH…GLPEPITRRW (92 aa)) are alpha-3. An Ig-like C1-type domain is found at 210–296 (PSTRVTHHPV…QHEGLPEPIT (87 aa)). The interval 300-306 (EPSPLST) is connecting peptide. The chain crosses the membrane as a helical span at residues 307–329 (IVIVSIAALVLLVVAGVIGAVIW). Residues 330 to 362 (RKQRSGGKGPGYSHAARDDSAQGSDVSLTAPRV) lie on the Cytoplasmic side of the membrane. The tract at residues 333 to 362 (RSGGKGPGYSHAARDDSAQGSDVSLTAPRV) is disordered.

It belongs to the MHC class I family. Heterodimer of an alpha chain and a beta chain (beta-2-microglobulin).

The protein resides in the membrane. Functionally, involved in the presentation of foreign antigens to the immune system. The chain is DLA class I histocompatibility antigen, A9/A9 alpha chain from Canis lupus familiaris (Dog).